We begin with the raw amino-acid sequence, 417 residues long: Serine hydroxymethyltransferase (417 aa).

Residues L122 and 126–128 (GHL) contribute to the (6S)-5,6,7,8-tetrahydrofolate site. K230 is subject to N6-(pyridoxal phosphate)lysine. A (6S)-5,6,7,8-tetrahydrofolate-binding site is contributed by 355 to 357 (SPF).

The protein belongs to the SHMT family. As to quaternary structure, homodimer. Pyridoxal 5'-phosphate is required as a cofactor.

It localises to the cytoplasm. The catalysed reaction is (6R)-5,10-methylene-5,6,7,8-tetrahydrofolate + glycine + H2O = (6S)-5,6,7,8-tetrahydrofolate + L-serine. The protein operates within one-carbon metabolism; tetrahydrofolate interconversion. Its pathway is amino-acid biosynthesis; glycine biosynthesis; glycine from L-serine: step 1/1. Functionally, catalyzes the reversible interconversion of serine and glycine with tetrahydrofolate (THF) serving as the one-carbon carrier. This reaction serves as the major source of one-carbon groups required for the biosynthesis of purines, thymidylate, methionine, and other important biomolecules. Also exhibits THF-independent aldolase activity toward beta-hydroxyamino acids, producing glycine and aldehydes, via a retro-aldol mechanism. This Francisella philomiragia subsp. philomiragia (strain ATCC 25017 / CCUG 19701 / FSC 153 / O#319-036) protein is Serine hydroxymethyltransferase.